The sequence spans 169 residues: MKGRIELGDVTPHNIKQLKRLNQVIFPVSYNDKFYKDVLEVGELAKLAYFNDIAVGAVCCRVDHSQNQKRLYIMTLGCLAPYRRLGIGTKMLNHVLNICEKDGTFDNIYLHVQISNESAIDFYRKFGFEIIETKKNYYKRIEPADAHVLQKNLKISSPGQNADVQKSEN.

One can recognise an N-acetyltransferase domain in the interval 5-154 (IELGDVTPHN…DAHVLQKNLK (150 aa)). Tyrosine 30 contributes to the substrate binding site. Residue tyrosine 72 is part of the active site. Methionine 74 is a substrate binding site. Residue 76–89 (LGCLAPYRRLGIGT) participates in acetyl-CoA binding. 78 to 89 (CLAPYRRLGIGT) lines the CoA pocket. Histidine 111 is a catalytic residue. Residue 116–125 (NESAIDFYRK) coordinates CoA. Residues 137-140 (YYKR) form a substrate region.

The protein belongs to the acetyltransferase family. GNAT subfamily.

It is found in the cytoplasm. The protein localises to the nucleus. The catalysed reaction is N-terminal L-methionyl-L-alanyl-[protein] + acetyl-CoA = N-terminal N(alpha)-acetyl-L-methionyl-L-alanyl-[protein] + CoA + H(+). It catalyses the reaction N-terminal L-methionyl-L-seryl-[protein] + acetyl-CoA = N-terminal N(alpha)-acetyl-L-methionyl-L-seryl-[protein] + CoA + H(+). The enzyme catalyses N-terminal L-methionyl-L-valyl-[protein] + acetyl-CoA = N-terminal N(alpha)-acetyl-L-methionyl-L-valyl-[protein] + CoA + H(+). It carries out the reaction N-terminal L-methionyl-L-threonyl-[protein] + acetyl-CoA = N-terminal N(alpha)-acetyl-L-methionyl-L-threonyl-[protein] + CoA + H(+). The catalysed reaction is N-terminal L-methionyl-L-lysyl-[protein] + acetyl-CoA = N-terminal N(alpha)-acetyl-L-methionyl-L-lysyl-[protein] + CoA + H(+). It catalyses the reaction N-terminal L-methionyl-L-leucyl-[protein] + acetyl-CoA = N-terminal N(alpha)-acetyl-L-methionyl-L-leucyl-[protein] + CoA + H(+). The enzyme catalyses N-terminal L-methionyl-L-phenylalanyl-[protein] + acetyl-CoA = N-terminal N(alpha)-acetyl-L-methionyl-L-phenylalanyl-[protein] + CoA + H(+). It carries out the reaction N-terminal L-methionyl-L-tyrosyl-[protein] + acetyl-CoA = N-terminal N(alpha)-acetyl-L-methionyl-L-tyrosyl-[protein] + CoA + H(+). Its function is as follows. N-alpha-acetyltransferase that acetylates the N-terminus of proteins that retain their initiating methionine. Has a broad substrate specificity: able to acetylate the initiator methionine of most peptides, except for those with a proline in second position. Also displays N-epsilon-acetyltransferase activity by mediating acetylation of the side chain of specific lysines on proteins. The relevance of N-epsilon-acetyltransferase activity is however unclear. Required for sister chromatid cohesion during mitosis by promoting binding of CDCA5/sororin to cohesin. The sequence is that of N-alpha-acetyltransferase 50 (naa50) from Xenopus tropicalis (Western clawed frog).